The following is a 556-amino-acid chain: Formate--tetrahydrofolate ligase (556 aa).

65-72 is an ATP binding site; sequence TPAGEGKS.

This sequence belongs to the formate--tetrahydrofolate ligase family.

The catalysed reaction is (6S)-5,6,7,8-tetrahydrofolate + formate + ATP = (6R)-10-formyltetrahydrofolate + ADP + phosphate. Its pathway is one-carbon metabolism; tetrahydrofolate interconversion. In Streptococcus pneumoniae (strain ATCC 700669 / Spain 23F-1), this protein is Formate--tetrahydrofolate ligase.